The chain runs to 423 residues: UPF0597 protein Emin_0811 (423 aa).

It belongs to the UPF0597 family.

The protein is UPF0597 protein Emin_0811 of Elusimicrobium minutum (strain Pei191).